A 1244-amino-acid polypeptide reads, in one-letter code: Superkiller complex protein 2 (1244 aa).

The tract at residues 218–249 (LDLSGGDEDEGEAAGGPRGDNASPSPSGTPLV) is disordered. Phosphoserine is present on residues S242 and S253. Residues 316–472 (ILHLEQHDSV…WIGRLKRRQI (157 aa)) form the Helicase ATP-binding domain. An ATP-binding site is contributed by 329–336 (AHTSAGKT). The DEVH box motif lies at 420–423 (DEVH). In terms of domain architecture, Helicase C-terminal spans 582–752 (GLTSLDLTTS…LTYTMILNLL (171 aa)).

This sequence belongs to the helicase family. SKI2 subfamily. As to quaternary structure, component of the SKI complex which consists of SKIC2, SKIC3 and SKIC8. Interacts with HBS1L isoform 2.

It localises to the nucleus. The protein localises to the cytoplasm. The catalysed reaction is ATP + H2O = ADP + phosphate + H(+). Its function is as follows. Helicase component of the SKI complex, a multiprotein complex that assists the RNA-degrading exosome during the mRNA decay and quality-control pathways. The SKI complex catalyzes mRNA extraction from 80S ribosomal complexes in the 3'-5' direction and channels mRNA to the cytosolic exosome for degradation. SKI-mediated extraction of mRNA from stalled ribosomes allow binding of the Pelota-HBS1L complex and subsequent ribosome disassembly by ABCE1 for ribosome recycling. In the nucleus, the SKI complex associates with transcriptionally active genes in a manner dependent on PAF1 complex (PAF1C). The polypeptide is Superkiller complex protein 2 (Mus musculus (Mouse)).